A 136-amino-acid polypeptide reads, in one-letter code: uncharacterized protein (136 aa).

The interval 1 to 51 is disordered; sequence MAANATSGRPPSIALRQPEATGWRRGIPAKVATKGTQAEREGDVRSGGRAR. Residues 37 to 46 are compositionally biased toward basic and acidic residues; it reads QAEREGDVRS.

This is an uncharacterized protein from Homo sapiens (Human).